The primary structure comprises 295 residues: Alpha-ketoglutarate-dependent sulfate ester dioxygenase (295 aa).

His-71 provides a ligand contact to substrate. Residues His-98 and Asp-100 each coordinate Fe cation. Val-101 is a binding site for substrate. Thr-125 contributes to the 2-oxoglutarate binding site. A Fe cation-binding site is contributed by His-252. Residues Arg-263 and Arg-267 each contribute to the 2-oxoglutarate site.

It belongs to the TfdA dioxygenase family. Requires Fe(2+) as cofactor.

The enzyme catalyses a primary linear alkyl sulfate ester + 2-oxoglutarate + O2 = an aldehyde + sulfate + succinate + CO2 + H(+). The catalysed reaction is 2-ethylhexyl sulfate + 2-oxoglutarate + O2 = 2-ethylhexanal + sulfate + succinate + CO2 + H(+). It carries out the reaction hexyl sulfate + 2-oxoglutarate + O2 = hexanal + sulfate + succinate + CO2 + H(+). It catalyses the reaction pentyl sulfate + 2-oxoglutarate + O2 = pentanal + sulfate + succinate + CO2 + H(+). The enzyme catalyses heptyl sulfate + 2-oxoglutarate + O2 = heptanal + sulfate + succinate + CO2 + H(+). Alpha-ketoglutarate-dependent sulfate ester dioxygenase, which oxidizes medium-chain alkyl-sulfate esters. Shows preference for 2-ethylhexyl sulfate (2-EHS) in vitro, leading to the formation of succinate and 2-ethylhexanal. Has likely a role in sulfate scavenging in vivo. Its function is as follows. Also causes the inactivation of the 2-carboxyquinoxaline Ty38c (an antitubercular compound that inhibits DprE1) via oxidative decarboxylation, using Ty38c instead of alpha-ketoglutarate as a substrate. Is thus responsible for primary resistance of M.tuberculosis to Ty38c in vitro. Overexpression of Rv3406 causes resistance to Ty38c. The polypeptide is Alpha-ketoglutarate-dependent sulfate ester dioxygenase (Mycobacterium tuberculosis (strain ATCC 25618 / H37Rv)).